The chain runs to 151 residues: MPRGSRSRTSRMAPPASRAPQMRAAPRPAPVAQPPAAAPPSAVGSSAAAPRQPGLMAQMATTAAGVAVGSAVGHTLGHAITGGFSGGSNAEPARPDITYQEPQGTQPAQQQQPCLYEIKQFLECAQNQGDIKLCEGFNEVLKQCRLANGLA.

Disordered stretches follow at residues 1–50 (MPRG…AAAP) and 77–111 (GHAI…AQQQ). Low complexity predominate over residues 10-26 (SRMAPPASRAPQMRAAP). The segment covering 27 to 38 (RPAPVAQPPAAA) has biased composition (pro residues). Composition is skewed to low complexity over residues 39-50 (PPSAVGSSAAAP) and 100-111 (QEPQGTQPAQQQ). A CHCH domain is found at 111–151 (QQPCLYEIKQFLECAQNQGDIKLCEGFNEVLKQCRLANGLA). 2 short sequence motifs (cx9C motif) span residues 114–124 (CLYEIKQFLEC) and 134–144 (CEGFNEVLKQC). Cystine bridges form between cysteine 114/cysteine 144 and cysteine 124/cysteine 134.

In terms of assembly, interacts with RBPJ.

The protein resides in the nucleus. The protein localises to the mitochondrion. Its subcellular location is the mitochondrion intermembrane space. Functionally, transcription factor. Binds to the oxygen responsive element of COX4I2 and activates its transcription under hypoxia conditions (4% oxygen), as well as normoxia conditions (20% oxygen). This chain is Coiled-coil-helix-coiled-coil-helix domain-containing protein 2 (CHCHD2), found in Homo sapiens (Human).